The primary structure comprises 75 residues: Small ribosomal subunit protein bS18 (75 aa).

This sequence belongs to the bacterial ribosomal protein bS18 family. As to quaternary structure, part of the 30S ribosomal subunit. Forms a tight heterodimer with protein bS6.

In terms of biological role, binds as a heterodimer with protein bS6 to the central domain of the 16S rRNA, where it helps stabilize the platform of the 30S subunit. This chain is Small ribosomal subunit protein bS18, found in Thermotoga sp. (strain RQ2).